The following is a 422-amino-acid chain: Phosphoribosylamine--glycine ligase (422 aa).

Residues 107-314 (KAFMQRHGIP…LFDVLDRAID (208 aa)) enclose the ATP-grasp domain. Residue 133 to 194 (VDREGAPIVI…EEFLAGEEAS (62 aa)) coordinates ATP. Mg(2+)-binding residues include glutamate 284 and asparagine 286.

This sequence belongs to the GARS family. Requires Mg(2+) as cofactor. The cofactor is Mn(2+).

It catalyses the reaction 5-phospho-beta-D-ribosylamine + glycine + ATP = N(1)-(5-phospho-beta-D-ribosyl)glycinamide + ADP + phosphate + H(+). It participates in purine metabolism; IMP biosynthesis via de novo pathway; N(1)-(5-phospho-D-ribosyl)glycinamide from 5-phospho-alpha-D-ribose 1-diphosphate: step 2/2. The sequence is that of Phosphoribosylamine--glycine ligase from Ralstonia nicotianae (strain ATCC BAA-1114 / GMI1000) (Ralstonia solanacearum).